A 259-amino-acid polypeptide reads, in one-letter code: Putative carbamate hydrolase RutD (259 aa).

It belongs to the AB hydrolase superfamily. Hydrolase RutD family.

The catalysed reaction is carbamate + 2 H(+) = NH4(+) + CO2. Functionally, involved in pyrimidine catabolism. May facilitate the hydrolysis of carbamate, a reaction that can also occur spontaneously. The sequence is that of Putative carbamate hydrolase RutD from Pseudomonas savastanoi pv. phaseolicola (strain 1448A / Race 6) (Pseudomonas syringae pv. phaseolicola (strain 1448A / Race 6)).